The following is a 741-amino-acid chain: NAD(P)H-quinone oxidoreductase subunit 5, chloroplastic (741 aa).

16 helical membrane-spanning segments follow: residues W9–F29, W40–I60, I89–I109, F125–I145, I147–T167, G185–F205, N219–A239, T258–A278, F284–F304, L327–I347, A354–C374, N396–S416, W425–Y445, L549–F569, V605–V625, and Y721–F741.

This sequence belongs to the complex I subunit 5 family. In terms of assembly, NDH is composed of at least 16 different subunits, 5 of which are encoded in the nucleus.

The protein resides in the plastid. It localises to the chloroplast thylakoid membrane. The enzyme catalyses a plastoquinone + NADH + (n+1) H(+)(in) = a plastoquinol + NAD(+) + n H(+)(out). It catalyses the reaction a plastoquinone + NADPH + (n+1) H(+)(in) = a plastoquinol + NADP(+) + n H(+)(out). Functionally, NDH shuttles electrons from NAD(P)H:plastoquinone, via FMN and iron-sulfur (Fe-S) centers, to quinones in the photosynthetic chain and possibly in a chloroplast respiratory chain. The immediate electron acceptor for the enzyme in this species is believed to be plastoquinone. Couples the redox reaction to proton translocation, and thus conserves the redox energy in a proton gradient. In Flaveria ramosissima (Yellowtops), this protein is NAD(P)H-quinone oxidoreductase subunit 5, chloroplastic (ndhF).